We begin with the raw amino-acid sequence, 256 residues long: Proteasome subunit beta type-5 (256 aa).

Residues 1 to 55 (CNMALADIVRLPPASEAPFAPLGAPRDLSGPPSKLAVRPWGGADLPGPGLQLLHG) constitute a propeptide, removed in mature form. Residue T56 is the Nucleophile of the active site.

Belongs to the peptidase T1B family. As to quaternary structure, the 26S proteasome consists of a 20S proteasome core and two 19S regulatory subunits. The 20S proteasome core is a barrel-shaped complex made of 28 subunits that are arranged in four stacked rings. The two outer rings are each formed by seven alpha subunits, and the two inner rings are formed by seven beta subunits. The proteolytic activity is exerted by three beta-subunits PSMB5, PSMB6 and PSMB7. Directly interacts with POMP. Interacts with ABCB1 and TAP1.

The protein localises to the cytoplasm. It is found in the nucleus. The enzyme catalyses Cleavage of peptide bonds with very broad specificity.. Functionally, component of the 20S core proteasome complex involved in the proteolytic degradation of most intracellular proteins. This complex plays numerous essential roles within the cell by associating with different regulatory particles. Associated with two 19S regulatory particles, forms the 26S proteasome and thus participates in the ATP-dependent degradation of ubiquitinated proteins. The 26S proteasome plays a key role in the maintenance of protein homeostasis by removing misfolded or damaged proteins that could impair cellular functions, and by removing proteins whose functions are no longer required. Associated with the PA200 or PA28, the 20S proteasome mediates ubiquitin-independent protein degradation. This type of proteolysis is required in several pathways including spermatogenesis (20S-PA200 complex) or generation of a subset of MHC class I-presented antigenic peptides (20S-PA28 complex). Within the 20S core complex, PSMB5 displays a chymotrypsin-like activity. The chain is Proteasome subunit beta type-5 (PSMB5) from Gallus gallus (Chicken).